Reading from the N-terminus, the 943-residue chain is Mechanosensitive ion channel protein BA (943 aa).

The segment at Met-1–His-67 is disordered. The Cytoplasmic segment spans residues Met-1–Arg-107. Residues Thr-14 to Gly-37 show a composition bias toward polar residues. The chain crosses the membrane as a helical span at residues Tyr-108–Ala-130. Residues Glu-131–Val-149 are Lumenal-facing. A helical membrane pass occupies residues Val-150–Val-175. The Cytoplasmic segment spans residues Ser-176 to Met-195. A helical membrane pass occupies residues Val-196 to Pro-214. Residues Arg-215 to Asn-233 are Lumenal-facing. The helical transmembrane segment at Val-234–Tyr-259 threads the bilayer. At His-260–Leu-468 the chain is on the cytoplasmic side. One can recognise an EF-hand domain in the interval Gly-412 to Thr-447. Ca(2+)-binding residues include Asp-425, Asp-427, Asn-429, Asp-431, and Glu-436. Residues Leu-469–Phe-489 traverse the membrane as a helical segment. The Lumenal segment spans residues Gly-490–Ser-502. The helical transmembrane segment at Leu-503–Val-523 threads the bilayer. Over Lys-524–Leu-943 the chain is Cytoplasmic. Residues Pro-677–Leu-943 are disordered. Low complexity-rich tracts occupy residues Gly-678–Ala-687 and Gly-744–Ala-759. A compositionally biased stretch (polar residues) spans Tyr-760–Thr-781. Residues Thr-798–Ala-810 show a composition bias toward basic and acidic residues. Residues Thr-827–Glu-842 are compositionally biased toward polar residues. A compositionally biased stretch (low complexity) spans Pro-857–Ser-880. The span at Pro-886 to Pro-904 shows a compositional bias: polar residues. Residues Asn-916–Leu-943 show a composition bias toward basic and acidic residues.

The protein belongs to the MscS (TC 1.A.23) family.

The protein localises to the cell membrane. The enzyme catalyses Ca(2+)(in) = Ca(2+)(out). In terms of biological role, acts as a mechanosensitive calcium channel in response to membrane stretch. Regulates intracellular calcium levels and cell volume for survival in response to hypo-osmotic shock. Involved in maintaining vacuole integrity and protecting the nuclear envelope upon hypo-osmotic shock. seems to contribute to CaCl2 toxicityIn contracstz to mscA, mscB seems to contribute to CaCl(2) toxicity. The protein is Mechanosensitive ion channel protein BA of Emericella nidulans (strain FGSC A4 / ATCC 38163 / CBS 112.46 / NRRL 194 / M139) (Aspergillus nidulans).